A 101-amino-acid chain; its full sequence is Urease subunit beta (101 aa).

The protein belongs to the urease beta subunit family. Heterotrimer of UreA (gamma), UreB (beta) and UreC (alpha) subunits. Three heterotrimers associate to form the active enzyme.

The protein localises to the cytoplasm. It carries out the reaction urea + 2 H2O + H(+) = hydrogencarbonate + 2 NH4(+). Its pathway is nitrogen metabolism; urea degradation; CO(2) and NH(3) from urea (urease route): step 1/1. The polypeptide is Urease subunit beta (Rhizobium meliloti (strain 1021) (Ensifer meliloti)).